The following is a 433-amino-acid chain: Actin-related protein 4 (433 aa).

Positions 289–317 are disordered; that stretch reads GSDEEMNEEPSKPIEQTENNEVSQQDSSV. Residues 302–317 show a composition bias toward polar residues; it reads IEQTENNEVSQQDSSV.

This sequence belongs to the actin family. ARP4 subfamily. As to quaternary structure, component of the NuA4 histone acetyltransferase complex, of the INO80 chromatin remodeling complex, and of the SWR1 chromatin remodeling complex.

It is found in the nucleus. Its function is as follows. Chromatin interaction component of the NuA4 histone acetyltransferase complex which is involved in transcriptional activation of selected genes principally by acetylation of nucleosomal histone H4 and H2A. The NuA4 complex is also involved in DNA repair. Is required for NuA4 complex integrity. Component of the SWR1 complex which mediates the ATP-dependent exchange of histone H2A for the H2A variant HZT1 leading to transcriptional regulation of selected genes by chromatin remodeling. Component of the INO80 complex which remodels chromatin by shifting nucleosomes and is involved in DNA repair. This is Actin-related protein 4 (alp5) from Schizosaccharomyces pombe (strain 972 / ATCC 24843) (Fission yeast).